Here is an 88-residue protein sequence, read N- to C-terminus: NADH-ubiquinone oxidoreductase chain 4L (88 aa).

2 helical membrane-spanning segments follow: residues 22–42 (IILM…LVLV) and 57–77 (IYII…LVAY).

It belongs to the complex I subunit 4L family.

The protein resides in the mitochondrion membrane. It carries out the reaction a ubiquinone + NADH + 5 H(+)(in) = a ubiquinol + NAD(+) + 4 H(+)(out). In terms of biological role, core subunit of the mitochondrial membrane respiratory chain NADH dehydrogenase (Complex I) that is believed to belong to the minimal assembly required for catalysis. Complex I functions in the transfer of electrons from NADH to the respiratory chain. The immediate electron acceptor for the enzyme is believed to be ubiquinone. The polypeptide is NADH-ubiquinone oxidoreductase chain 4L (ND4L) (Trimorphomyces papilionaceus (Jelly fungus)).